We begin with the raw amino-acid sequence, 226 residues long: Large ribosomal subunit protein uL4 (226 aa).

Positions 47–74 are disordered; the sequence is GTAKAKTRSEVSGGGRKPWPQKHTGRAR.

This sequence belongs to the universal ribosomal protein uL4 family. Part of the 50S ribosomal subunit.

In terms of biological role, one of the primary rRNA binding proteins, this protein initially binds near the 5'-end of the 23S rRNA. It is important during the early stages of 50S assembly. It makes multiple contacts with different domains of the 23S rRNA in the assembled 50S subunit and ribosome. Forms part of the polypeptide exit tunnel. The protein is Large ribosomal subunit protein uL4 of Kosmotoga olearia (strain ATCC BAA-1733 / DSM 21960 / TBF 19.5.1).